The primary structure comprises 1971 residues: Germinal-center associated nuclear protein (1971 aa).

2 disordered regions span residues 1 to 50 (MHPV…KSLA) and 214 to 406 (PAFA…RGKS). Residues 8–29 (GGQQPSAFAVSSSTTGTYQTKS) show a composition bias toward polar residues. An Asymmetric dimethylarginine modification is found at Arg32. Residues 33 to 335 (FGQPSLFGQN…RPRGGTLFGR (303 aa)) form an FG-repeats region. Polar residues-rich tracts occupy residues 38 to 50 (LFGQ…KSLA) and 214 to 224 (PAFASPLSNQN). Residues 232 to 253 (STSAFGSSNSSFSTFPTASPGS) show a composition bias toward low complexity. Composition is skewed to basic and acidic residues over residues 288 to 321 (RKED…DKRP) and 342 to 359 (KSNK…KESG). Positions 414–550 (EEWIYSLGGV…AAGSLLSKSS (137 aa)) are DNA primase. Position 424 is a phosphoserine (Ser424). 2 positions are modified to N6-acetyllysine: Lys483 and Lys484. Phosphoserine occurs at positions 502, 531, and 550. The 184-residue stretch at 768-951 (NNENMTKCLQ…RKSVFIGRKL (184 aa)) folds into the PCI domain. The stretch at 1124 to 1162 (HVAAEEVSMERQRLEEEKQRAEEERLKQERELMLTQLSE) forms a coiled coil. Residues 1793 to 1840 (RELQLSHGRSGMRSIHPPTSTFPTPLLHVHQKGKKKEESGREGSLSTE) form a disordered region.

The protein belongs to the SAC3 family. In terms of assembly, component of the nuclear pore complex (NPC)-associated TREX-2 complex (transcription and export complex 2), composed of at least GANP, 2 copies of ENY2, PCID2, SEM1/DSS1, and either centrin CETN2 or centrin CETN3. The TREX-2 complex also associates with ALYREF/ALY. Interacts with RNA polymerase II subunit POLR2A and with the transcription elongation factor SUPT5H/SPT5. Interacts (via FG-repeats) with NXF1; this interaction is not mediated by RNA. Interacts with nuclear envelope proteins NUP62, NUP153 and RANBP2/NUP358; interaction with NUP153 is required for full localization at the nuclear pore complex. Interacts with several RNA helicases, including DHX9, DDX21, and DDX39A/DDX39, and with DNA topoisomerase TOP2A. Directly interacts with AICDA/AID. Interacts with the glucocorticoid receptor NR3C1. Interacts with MCM3. Phosphorylation at Ser-502 is induced in B-cells by CD40-stimulation, but not by bacterial lipopolysaccharide (LPS). Expressed at low levels in lymphoid organs, including thymus, spleen and lymph nodes. Up-regulated in stimulated B-cells in spleen and Peyer's patch germinal centers (at protein level).

Its subcellular location is the cytoplasm. The protein resides in the nucleus. It is found in the nucleus envelope. It localises to the nuclear pore complex. The protein localises to the nucleoplasm. Its subcellular location is the chromosome. It catalyses the reaction L-lysyl-[histone] + acetyl-CoA = N(6)-acetyl-L-lysyl-[histone] + CoA + H(+). Its function is as follows. As a component of the TREX-2 complex, involved in the export of mRNAs to the cytoplasm through the nuclear pores. Through the acetylation of histones, affects the assembly of nucleosomes at immunoglobulin variable region genes and promotes the recruitment and positioning of transcription complex to favor DNA cytosine deaminase AICDA/AID targeting, hence promoting somatic hypermutations. In Mus musculus (Mouse), this protein is Germinal-center associated nuclear protein (Mcm3ap).